We begin with the raw amino-acid sequence, 486 residues long: Phosphomethylpyrimidine synthase (486 aa).

Substrate is bound by residues Asn80, Met109, Tyr139, His175, 195 to 197, 236 to 239, and Glu275; these read SRG and DSLR. His279 is a binding site for Zn(2+). Tyr329 contacts substrate. His370 contacts Zn(2+). 3 residues coordinate [4Fe-4S] cluster: Cys450, Cys453, and Cys458.

It belongs to the ThiC family. [4Fe-4S] cluster is required as a cofactor.

The enzyme catalyses 5-amino-1-(5-phospho-beta-D-ribosyl)imidazole + S-adenosyl-L-methionine = 4-amino-2-methyl-5-(phosphooxymethyl)pyrimidine + CO + 5'-deoxyadenosine + formate + L-methionine + 3 H(+). Its pathway is cofactor biosynthesis; thiamine diphosphate biosynthesis. Catalyzes the synthesis of the hydroxymethylpyrimidine phosphate (HMP-P) moiety of thiamine from aminoimidazole ribotide (AIR) in a radical S-adenosyl-L-methionine (SAM)-dependent reaction. The polypeptide is Phosphomethylpyrimidine synthase (Trichodesmium erythraeum (strain IMS101)).